The following is an 81-amino-acid chain: ATP synthase subunit c, chloroplastic (81 aa).

2 consecutive transmembrane segments (helical) span residues 3–23 and 57–77; these read PLIS…ASIG and LAFM…LLFA.

It belongs to the ATPase C chain family. F-type ATPases have 2 components, F(1) - the catalytic core - and F(0) - the membrane proton channel. F(1) has five subunits: alpha(3), beta(3), gamma(1), delta(1), epsilon(1). F(0) has four main subunits: a(1), b(1), b'(1) and c(10-14). The alpha and beta chains form an alternating ring which encloses part of the gamma chain. F(1) is attached to F(0) by a central stalk formed by the gamma and epsilon chains, while a peripheral stalk is formed by the delta, b and b' chains.

Its subcellular location is the plastid. The protein resides in the chloroplast thylakoid membrane. Its function is as follows. F(1)F(0) ATP synthase produces ATP from ADP in the presence of a proton or sodium gradient. F-type ATPases consist of two structural domains, F(1) containing the extramembraneous catalytic core and F(0) containing the membrane proton channel, linked together by a central stalk and a peripheral stalk. During catalysis, ATP synthesis in the catalytic domain of F(1) is coupled via a rotary mechanism of the central stalk subunits to proton translocation. In terms of biological role, key component of the F(0) channel; it plays a direct role in translocation across the membrane. A homomeric c-ring of between 10-14 subunits forms the central stalk rotor element with the F(1) delta and epsilon subunits. The protein is ATP synthase subunit c, chloroplastic of Gossypium barbadense (Sea Island cotton).